Here is a 56-residue protein sequence, read N- to C-terminus: Single-pass membrane and coiled-coil domain-containing protein 4 homolog (56 aa).

Residues M1 to H27 form a disordered region. Residues A9 to V31 are a coiled coil. The helical transmembrane segment at V30 to Y50 threads the bilayer.

Belongs to the SMCO4 family.

The protein localises to the membrane. The protein is Single-pass membrane and coiled-coil domain-containing protein 4 homolog of Nematostella vectensis (Starlet sea anemone).